The primary structure comprises 218 residues: Cytochrome b6 (218 aa).

The helical transmembrane segment at 35 to 55 (IFYCLGGITLTCFLVQVATGF) threads the bilayer. Heme c is bound at residue Cys-38. Heme b-binding residues include His-89 and His-103. A run of 3 helical transmembrane segments spans residues 93–113 (ASMMVLMMILHVFRVYLTGGF), 119–139 (LTWVTGVLLGVLTASFGVTGY), and 189–209 (LHTFVLPLITIVFMLMHFLMI). Residues His-190 and His-205 each coordinate heme b.

The protein belongs to the cytochrome b family. PetB subfamily. The 4 large subunits of the cytochrome b6-f complex are cytochrome b6, subunit IV (17 kDa polypeptide, PetD), cytochrome f and the Rieske protein, while the 4 small subunits are PetG, PetL, PetM and PetN. The complex functions as a dimer. The cofactor is heme b. Heme c is required as a cofactor.

The protein localises to the plastid thylakoid membrane. Its function is as follows. Component of the cytochrome b6-f complex, which mediates electron transfer between photosystem II (PSII) and photosystem I (PSI), cyclic electron flow around PSI, and state transitions. The polypeptide is Cytochrome b6 (petB) (Cuscuta gronovii (Common dodder)).